Reading from the N-terminus, the 472-residue chain is Glycogen synthase (472 aa).

Lys16 is an ADP-alpha-D-glucose binding site.

The protein belongs to the glycosyltransferase 1 family. Bacterial/plant glycogen synthase subfamily.

The catalysed reaction is [(1-&gt;4)-alpha-D-glucosyl](n) + ADP-alpha-D-glucose = [(1-&gt;4)-alpha-D-glucosyl](n+1) + ADP + H(+). The protein operates within glycan biosynthesis; glycogen biosynthesis. Its function is as follows. Synthesizes alpha-1,4-glucan chains using ADP-glucose. The protein is Glycogen synthase of Jannaschia sp. (strain CCS1).